Reading from the N-terminus, the 556-residue chain is PPE family protein PPE2 (556 aa).

Residues 8 to 164 (ASPPEVHSAL…ASYQAVSTAA (157 aa)) form a PPE region. The SH3-like stretch occupies residues 201–256 (QKIGYTDFYNNVIQPFINWLTNLPFLQAMFSGFDPWLPSLGNPLTFLSPANIAFAL). The leucine zipper motif stretch occupies residues 319–340 (LEQTLALLPAALPLLAAPLAPL). Disordered regions lie at residues 385-418 (TPTP…PPVT) and 443-556 (GTGV…TRVE). A compositionally biased stretch (pro residues) spans 400–417 (PTPPPGPPPPPVTAPPPV). The span at 456–471 (AEAPAAAAAPEEQVQP) shows a compositional bias: low complexity. Residues 472–481 (QRRRRPKIKQ) show a composition bias toward basic residues. A Nuclear localization signal motif is present at residues 473–481 (RRRRPKIKQ).

Belongs to the mycobacterial PPE family.

It is found in the secreted. Its subcellular location is the host cytoplasm. The protein resides in the host nucleus. Inhibits nitric oxide (NO) production in activated macrophages. Acts by inhibiting expression of the host inducible nitric oxide synthase (iNOS). PPE2 is translocated into the host macrophage nucleus, where it interacts with a GATA-binding site overlapping with the TATA box of NOS2 (iNOS) promoter, and strongly inhibits NOS2 gene transcription. Reduction in NO production in turn facilitates intracellular survival of the bacilli inside the macrophage. In addition, disrupts the assembly of NADPH oxidase complex, which inhibits NADPH oxidase-mediated reactive oxygen species (ROS) generation in macrophages and favors M.tuberculosis survival. Acts by interacting with NCF2, the cytosolic subunit of NADPH oxidase, and preventing translocation of NCF2 and NCF1 to the membrane, which causes a reduction of the functional assembly of NADPH oxidase complex and a decrease in NADPH oxidase activity. This is PPE family protein PPE2 (PPE2) from Mycobacterium tuberculosis (strain ATCC 25618 / H37Rv).